Here is a 422-residue protein sequence, read N- to C-terminus: Methylaspartate ammonia-lyase (422 aa).

Gln-175 provides a ligand contact to (2S,3S)-3-methyl-L-aspartate. Mg(2+) contacts are provided by Asp-239, Glu-276, and Asp-310. Residue Gln-332 participates in (2S,3S)-3-methyl-L-aspartate binding. Lys-334 functions as the Proton acceptor in the catalytic mechanism. Position 363–364 (363–364) interacts with (2S,3S)-3-methyl-L-aspartate; it reads TC.

The protein belongs to the methylaspartate ammonia-lyase family. In terms of assembly, homodimer. It depends on Mg(2+) as a cofactor.

It catalyses the reaction (2S,3S)-3-methyl-L-aspartate = mesaconate + NH4(+). It participates in amino-acid degradation; L-glutamate degradation via mesaconate pathway; acetate and pyruvate from L-glutamate: step 2/4. Functionally, involved in the methylaspartate cycle. Catalyzes the formation of the alpha,beta-unsaturated bond by the reversible anti elimination of ammonia from L-threo-beta-methylaspartate (L-threo-(2S,3S)-3-methylaspartate) to give mesaconate. This Haloarcula marismortui (strain ATCC 43049 / DSM 3752 / JCM 8966 / VKM B-1809) (Halobacterium marismortui) protein is Methylaspartate ammonia-lyase (mal).